A 1530-amino-acid polypeptide reads, in one-letter code: Synaptonemal complex protein 2 (1530 aa).

The span at 439–461 (EKSKSPKEFAKPSKYIKNSDKGN) shows a compositional bias: basic and acidic residues. The segment at 439–480 (EKSKSPKEFAKPSKYIKNSDKGNRNNSQLEKTTPSKRKMSEA) is disordered. 2 positions are modified to phosphoserine: S457 and S465. T471 carries the phosphothreonine modification. A phosphoserine mark is found at S494, S519, S529, and S538. Positions 496 to 555 (VLFSNTSIPPRRRRIKPPLQMTSSAEKPSVSQTSENRVDNAASLKSRSSEGRHRRDNIDK) are disordered. Residues 515 to 530 (QMTSSAEKPSVSQTSE) show a composition bias toward polar residues. Basic and acidic residues predominate over residues 542-555 (RSSEGRHRRDNIDK). T619 bears the Phosphothreonine mark. Disordered stretches follow at residues 653–676 (QKSSSSISDHNSEGTGKVKYKKEQ), 693–717 (HNQQQNHPKYSGQKNTENAKQSDWP), and 755–795 (DKNP…SKGK). S660 and S664 each carry phosphoserine. Composition is skewed to polar residues over residues 695-713 (QQQNHPKYSGQKNTENAKQ) and 755-764 (DKNPSASKNV). S936 is modified (phosphoserine). T938 carries the post-translational modification Phosphothreonine. The segment at 962–1003 (QLIDYSRNKNVKNHKSGKSRSSLEKGQPSSKMTPSKNITKKM) is disordered. Basic residues predominate over residues 970 to 979 (KNVKNHKSGK). Polar residues predominate over residues 988-998 (QPSSKMTPSKN). Residues S1136, S1138, S1145, S1161, and S1177 each carry the phosphoserine modification. T1189 bears the Phosphothreonine mark. Phosphoserine occurs at positions 1204, 1234, 1253, 1295, and 1297. The residue at position 1339 (T1339) is a Phosphothreonine.

The protein belongs to the SYCP2 family. As to quaternary structure, component of the lateral elements of synaptonemal complexes. Heterodimer with SYCP3. Interacts with SMC1A and SMC3. Interacts with TEX11. In terms of processing, phosphorylated.

The protein resides in the nucleus. Its subcellular location is the chromosome. Major component of the axial/lateral elements of synaptonemal complexes (SCS) during meiotic prophase. Plays a role in the assembly of synaptonemal complexes. Required for normal meiotic chromosome synapsis during oocyte and spermatocyte development and for normal male and female fertility. Required for insertion of SYCP3 into synaptonemal complexes. May be involved in the organization of chromatin by temporarily binding to DNA scaffold attachment regions. Requires SYCP3, but not SYCP1, in order to be incorporated into the axial/lateral elements. The chain is Synaptonemal complex protein 2 (SYCP2) from Homo sapiens (Human).